The primary structure comprises 84 residues: MSEDEKLPQVIMDPADYEALKKRLDELEKKVENTNAELFQLAGKKVGRDIGILYGLVIGIILSYILPALIKIIQILSLKVLVQQ.

The chain crosses the membrane as a helical span at residues 50 to 70 (IGILYGLVIGIILSYILPALI).

The protein belongs to the MtrG family. As to quaternary structure, the complex is composed of 8 subunits; MtrA, MtrB, MtrC, MtrD, MtrE, MtrF, MtrG and MtrH.

The protein resides in the cell membrane. It catalyses the reaction 5-methyl-5,6,7,8-tetrahydromethanopterin + coenzyme M + 2 Na(+)(in) = 5,6,7,8-tetrahydromethanopterin + methyl-coenzyme M + 2 Na(+)(out). It functions in the pathway one-carbon metabolism; methanogenesis from CO(2); methyl-coenzyme M from 5,10-methylene-5,6,7,8-tetrahydromethanopterin: step 2/2. Functionally, part of a complex that catalyzes the formation of methyl-coenzyme M and tetrahydromethanopterin from coenzyme M and methyl-tetrahydromethanopterin. This is an energy-conserving, sodium-ion translocating step. In Methanocaldococcus jannaschii (strain ATCC 43067 / DSM 2661 / JAL-1 / JCM 10045 / NBRC 100440) (Methanococcus jannaschii), this protein is Tetrahydromethanopterin S-methyltransferase subunit G.